We begin with the raw amino-acid sequence, 456 residues long: CCA-adding enzyme (456 aa).

Positions 53 and 56 each coordinate ATP. CTP contacts are provided by serine 53 and lysine 56. Residues aspartate 65, aspartate 67, and aspartate 119 each contribute to the Mg(2+) site. 3 residues coordinate ATP: histidine 142, lysine 161, and tyrosine 170. CTP is bound by residues histidine 142, lysine 161, and tyrosine 170.

Belongs to the tRNA nucleotidyltransferase/poly(A) polymerase family. Archaeal CCA-adding enzyme subfamily. In terms of assembly, homodimer. Requires Mg(2+) as cofactor.

It carries out the reaction a tRNA precursor + 2 CTP + ATP = a tRNA with a 3' CCA end + 3 diphosphate. The catalysed reaction is a tRNA with a 3' CCA end + 2 CTP + ATP = a tRNA with a 3' CCACCA end + 3 diphosphate. Its function is as follows. Catalyzes the addition and repair of the essential 3'-terminal CCA sequence in tRNAs without using a nucleic acid template. Adds these three nucleotides in the order of C, C, and A to the tRNA nucleotide-73, using CTP and ATP as substrates and producing inorganic pyrophosphate. tRNA 3'-terminal CCA addition is required both for tRNA processing and repair. Also involved in tRNA surveillance by mediating tandem CCA addition to generate a CCACCA at the 3' terminus of unstable tRNAs. While stable tRNAs receive only 3'-terminal CCA, unstable tRNAs are marked with CCACCA and rapidly degraded. The protein is CCA-adding enzyme of Thermococcus kodakarensis (strain ATCC BAA-918 / JCM 12380 / KOD1) (Pyrococcus kodakaraensis (strain KOD1)).